Consider the following 397-residue polypeptide: Argininosuccinate synthase (397 aa).

ATP is bound at residue 9–17 (AYSGGLDTT). L-citrulline is bound at residue Tyr-87. Gly-117 provides a ligand contact to ATP. Thr-119, Asn-123, and Asp-124 together coordinate L-aspartate. An L-citrulline-binding site is contributed by Asn-123. L-citrulline-binding residues include Arg-127, Ser-174, Ser-183, Glu-259, and Tyr-271.

The protein belongs to the argininosuccinate synthase family. Type 1 subfamily. Homotetramer.

Its subcellular location is the cytoplasm. It carries out the reaction L-citrulline + L-aspartate + ATP = 2-(N(omega)-L-arginino)succinate + AMP + diphosphate + H(+). It functions in the pathway amino-acid biosynthesis; L-arginine biosynthesis; L-arginine from L-ornithine and carbamoyl phosphate: step 2/3. The protein is Argininosuccinate synthase of Pyrobaculum aerophilum (strain ATCC 51768 / DSM 7523 / JCM 9630 / CIP 104966 / NBRC 100827 / IM2).